A 279-amino-acid polypeptide reads, in one-letter code: PHO85 cyclin-1 (279 aa).

In terms of domain architecture, Cyclin N-terminal spans 19–152 (DIIKFLTDTT…LLQLLNWDLR (134 aa)). The tract at residues 29 to 36 (LRVVPSSN) is required for degradation by DMA1. Thr-39 bears the Phosphothreonine; by PHO85 mark. Position 43 is a phosphoserine; by PHO85 (Ser-43). Residues Lys-82 and Lys-121 each participate in a glycyl lysine isopeptide (Lys-Gly) (interchain with G-Cter in ubiquitin) cross-link.

Belongs to the cyclin family. PCL1,2 subfamily. In terms of assembly, forms a cyclin-CDK complex with PHO85. Interacts with HMS1, NCP1 and NPA3. Interacts with DMA1. Post-translationally, phosphorylated by PHO85; necessary for interaction with DMA1 and subsequent degradation. Ubiquitinated by E3 ubiquitin ligase DMA1 in response to nutrient condition; this targets PCL1 for destruction.

The protein localises to the cytoplasm. Its subcellular location is the nucleus. Functionally, G1/S-specific cyclin partner of the cyclin-dependent kinase (CDK) PHO85. Essential for the control of the cell cycle at the G1/S (start) transition. The PCL1-PHO85 cyclin-CDK holoenzyme is involved in phosphorylation of the CDK inhibitor (CKI) SIC1, which is required for its ubiquitination and degradation, releasing repression of b-type cyclins and promoting exit from mitosis. Together with cyclin PCL2, positively controls degradation of sphingoid long chain base kinase LCB4. PCL1-PHO85 phosphorylates LCB4, which is required for its ubiquitination and degradation. PCL1-PHO85 also phosphorylates HMS1, NCP1 and NPA3, which may all have a role in mitotic exit. This chain is PHO85 cyclin-1, found in Saccharomyces cerevisiae (strain ATCC 204508 / S288c) (Baker's yeast).